The chain runs to 466 residues: Ribulose bisphosphate carboxylase large chain (466 aa).

Lys5 carries the N6,N6,N6-trimethyllysine modification. 2 residues coordinate substrate: Asn114 and Thr164. Catalysis depends on Lys166, which acts as the Proton acceptor. Lys168 is a substrate binding site. Residues Lys192, Asp194, and Glu195 each contribute to the Mg(2+) site. Lys192 carries the N6-carboxylysine modification. Residue His285 is the Proton acceptor of the active site. Substrate-binding residues include Arg286, His318, and Ser370.

Belongs to the RuBisCO large chain family. Type I subfamily. In terms of assembly, heterohexadecamer of 8 large chains and 8 small chains; disulfide-linked. The disulfide link is formed within the large subunit homodimers. Mg(2+) is required as a cofactor. Post-translationally, the disulfide bond which can form in the large chain dimeric partners within the hexadecamer appears to be associated with oxidative stress and protein turnover.

The protein localises to the plastid. The protein resides in the chloroplast. It carries out the reaction 2 (2R)-3-phosphoglycerate + 2 H(+) = D-ribulose 1,5-bisphosphate + CO2 + H2O. It catalyses the reaction D-ribulose 1,5-bisphosphate + O2 = 2-phosphoglycolate + (2R)-3-phosphoglycerate + 2 H(+). In terms of biological role, ruBisCO catalyzes two reactions: the carboxylation of D-ribulose 1,5-bisphosphate, the primary event in carbon dioxide fixation, as well as the oxidative fragmentation of the pentose substrate in the photorespiration process. Both reactions occur simultaneously and in competition at the same active site. This is Ribulose bisphosphate carboxylase large chain from Cercidiphyllum japonicum (Katsura tree).